The sequence spans 104 residues: Large ribosomal subunit protein uL24 (104 aa).

It belongs to the universal ribosomal protein uL24 family. In terms of assembly, part of the 50S ribosomal subunit.

One of two assembly initiator proteins, it binds directly to the 5'-end of the 23S rRNA, where it nucleates assembly of the 50S subunit. Its function is as follows. One of the proteins that surrounds the polypeptide exit tunnel on the outside of the subunit. The sequence is that of Large ribosomal subunit protein uL24 from Pseudomonas fluorescens (strain Pf0-1).